A 461-amino-acid chain; its full sequence is Tubulin gamma chain (461 aa).

142 to 148 (AGGTGSG) is a binding site for GTP.

It belongs to the tubulin family.

The protein resides in the cytoplasm. It localises to the cytoskeleton. The protein localises to the microtubule organizing center. It is found in the spindle pole body. In terms of biological role, tubulin is the major constituent of microtubules. The gamma chain is found at microtubule organizing centers (MTOC) such as the spindle poles or the centrosome, suggesting that it is involved in the minus-end nucleation of microtubule assembly. The sequence is that of Tubulin gamma chain (tbg) from Neurospora crassa (strain ATCC 24698 / 74-OR23-1A / CBS 708.71 / DSM 1257 / FGSC 987).